Reading from the N-terminus, the 248-residue chain is Eukaryotic translation initiation factor 6 (248 aa).

It belongs to the eIF-6 family. Monomer. Associates with the 60S ribosomal subunit.

The protein resides in the cytoplasm. It is found in the nucleus. Its subcellular location is the nucleolus. Functionally, binds to the 60S ribosomal subunit and prevents its association with the 40S ribosomal subunit to form the 80S initiation complex in the cytoplasm. May also be involved in ribosome biogenesis. This Trypanosoma cruzi (strain CL Brener) protein is Eukaryotic translation initiation factor 6.